A 261-amino-acid polypeptide reads, in one-letter code: Homeobox protein engrailed-2b (261 aa).

Composition is skewed to basic and acidic residues over residues 1–21, 53–72, and 100–116; these read MEENDHSNRDVERQDSGDESN, GRRKEGSRRDEINIVERENR, and KKTDISTDESLKSRAET. Disordered stretches follow at residues 1–24, 53–125, and 152–176; these read MEENDHSNRDVERQDSGDESNRAI, GRRK…SSDS, and DRPSSGPRSRKPKKKTPTKEDKRPR. A DNA-binding region (homeobox) is located at residues 172–231; sequence DKRPRTAFTAEQLQRLKNEFQNNRYLTEQRRQALAQELGLNESQIKIWFQNKRAKIKKAT.

The protein belongs to the engrailed homeobox family.

The protein resides in the nucleus. The polypeptide is Homeobox protein engrailed-2b (eng2b) (Danio rerio (Zebrafish)).